The chain runs to 883 residues: Translation initiation factor IF-2 (883 aa).

2 disordered regions span residues 52–102 (KGRD…VNVE) and 115–297 (VEAE…PTQP). Composition is skewed to basic and acidic residues over residues 115–179 (VEAE…REAT) and 204–237 (AAEK…ERAA). A compositionally biased stretch (low complexity) spans 239–248 (KTGATAPAAK). Basic residues predominate over residues 265-275 (PGRRGGKKGGR). A compositionally biased stretch (low complexity) spans 276–285 (RAASGGEAAK). The tr-type G domain maps to 383 to 550 (PRPPVVTVMG…AILLQAELME (168 aa)). The tract at residues 392–399 (GHVDHGKT) is G1. 392 to 399 (GHVDHGKT) serves as a coordination point for GTP. The segment at 417 to 421 (GITQH) is G2. Residues 438-441 (DTPG) are G3. Residues 438–442 (DTPGH) and 492–495 (NKID) contribute to the GTP site. The tract at residues 492–495 (NKID) is G4. The interval 528 to 530 (SAK) is G5.

Belongs to the TRAFAC class translation factor GTPase superfamily. Classic translation factor GTPase family. IF-2 subfamily.

The protein localises to the cytoplasm. Functionally, one of the essential components for the initiation of protein synthesis. Protects formylmethionyl-tRNA from spontaneous hydrolysis and promotes its binding to the 30S ribosomal subunits. Also involved in the hydrolysis of GTP during the formation of the 70S ribosomal complex. This Alkalilimnicola ehrlichii (strain ATCC BAA-1101 / DSM 17681 / MLHE-1) protein is Translation initiation factor IF-2.